Reading from the N-terminus, the 273-residue chain is Tryptase-2 (273 aa).

The signal sequence occupies residues 1–18 (MLHLLALALLLSLVSAAP). The propeptide at 19-28 (APGQALQRSG) is activation peptide. Positions 29-270 (IIGGKEAPGS…YLDWIHQYVP (242 aa)) constitute a Peptidase S1 domain. Cysteines 57 and 73 form a disulfide. Catalysis depends on charge relay system residues His72 and Asp119. Disulfide bonds link Cys153/Cys228, Cys186/Cys209, and Cys218/Cys246. The Charge relay system role is filled by Ser222. Asn231 is a glycosylation site (N-linked (GlcNAc...) asparagine).

This sequence belongs to the peptidase S1 family. Tryptase subfamily. Homotetramer.

The protein localises to the secreted. It carries out the reaction Preferential cleavage: Arg-|-Xaa, Lys-|-Xaa, but with more restricted specificity than trypsin.. In terms of biological role, tryptase is the major neutral protease present in mast cells and is secreted upon the coupled activation-degranulation response of this cell type. The sequence is that of Tryptase-2 from Ovis aries (Sheep).